A 456-amino-acid chain; its full sequence is Outer membrane efflux protein BepC (456 aa).

The signal sequence occupies residues 1–28 (MRYTVFKACKELVAAAVLLSGTVLTGQA). Residues 312–341 (RTSAQIRQSKEQLGQARIEVDVVQDKVRQA) adopt a coiled-coil conformation.

The protein belongs to the outer membrane factor (OMF) (TC 1.B.17) family. Probably part of a tripartite efflux pump, which is composed of an outer membrane efflux protein, an inner membrane protein and a protein that expands the periplasmic space. Could form a tripartite pump with BepD and BepE or with BepF and BepG.

It is found in the cell outer membrane. Involved in the efflux of toxic and relatively hydrophobic compounds. Influences survival inside the host. In Brucella suis biovar 1 (strain 1330), this protein is Outer membrane efflux protein BepC (bepC).